A 240-amino-acid chain; its full sequence is Large ribosomal subunit protein uL2 (240 aa).

Residues 1-11 (MGKRLISQNRG) show a composition bias toward polar residues. 2 disordered regions span residues 1-26 (MGKR…KRKG) and 206-240 (GGGR…TGRK). Basic residues-rich tracts occupy residues 13 to 26 (GTPK…KRKG) and 228 to 240 (KVGH…TGRK).

The protein belongs to the universal ribosomal protein uL2 family. As to quaternary structure, part of the 50S ribosomal subunit. Forms a bridge to the 30S subunit in the 70S ribosome.

Functionally, one of the primary rRNA binding proteins. Required for association of the 30S and 50S subunits to form the 70S ribosome, for tRNA binding and peptide bond formation. It has been suggested to have peptidyltransferase activity; this is somewhat controversial. Makes several contacts with the 16S rRNA in the 70S ribosome. The chain is Large ribosomal subunit protein uL2 from Methanococcus vannielii (strain ATCC 35089 / DSM 1224 / JCM 13029 / OCM 148 / SB).